The primary structure comprises 85 residues: Large ribosomal subunit protein bL27 (85 aa).

The interval 1–20 (MAHKKAGGSTRNGRDSEAKR) is disordered.

This sequence belongs to the bacterial ribosomal protein bL27 family.

This Proteus mirabilis (strain HI4320) protein is Large ribosomal subunit protein bL27.